The chain runs to 440 residues: Microtubule-associated tumor suppressor 1 homolog A (440 aa).

The disordered stretch occupies residues 44–67 (KSRTNSKNPQPPTNGQPDLVPPES). Positions 69 to 401 (SRNVEYYKAQ…RLSMENEELL (333 aa)) form a coiled coil. The interval 407-440 (GDLNSPRKISPSPSLNLQSPRTSGMFSSPPVSPR) is disordered. Over residues 417–432 (PSPSLNLQSPRTSGMF) the composition is skewed to polar residues.

The protein belongs to the MTUS1 family. As to quaternary structure, homodimer.

It localises to the mitochondrion. The protein localises to the golgi apparatus. The protein resides in the cell membrane. Its subcellular location is the nucleus. May inhibit cell proliferation. The sequence is that of Microtubule-associated tumor suppressor 1 homolog A (mtus1a) from Danio rerio (Zebrafish).